The primary structure comprises 493 residues: Alpha-amylase-related protein (493 aa).

An N-terminal signal peptide occupies residues 1-19 (MFKFALTLTLCLAGSLSLA). Gln20 bears the Pyrrolidone carboxylic acid mark. A disulfide bond links Cys47 and Cys103. Positions 117, 168, and 177 each coordinate Ca(2+). An intrachain disulfide couples Cys156 to Cys170. Residue Arg205 coordinates chloride. Asp207 acts as the Nucleophile in catalysis. His211 is a Ca(2+) binding site. Catalysis depends on Glu244, which acts as the Proton donor. Residues Asn307 and Arg342 each contribute to the chloride site. Disulfide bonds link Cys375–Cys381, Cys417–Cys440, and Cys447–Cys459.

This sequence belongs to the glycosyl hydrolase 13 family. As to quaternary structure, monomer. Ca(2+) is required as a cofactor. Chloride serves as cofactor.

The protein localises to the secreted. The catalysed reaction is Endohydrolysis of (1-&gt;4)-alpha-D-glucosidic linkages in polysaccharides containing three or more (1-&gt;4)-alpha-linked D-glucose units.. The chain is Alpha-amylase-related protein (Amyrel) from Drosophila simulans (Fruit fly).